A 142-amino-acid chain; its full sequence is Large ribosomal subunit protein uL13 (142 aa).

The protein belongs to the universal ribosomal protein uL13 family. In terms of assembly, part of the 50S ribosomal subunit.

This protein is one of the early assembly proteins of the 50S ribosomal subunit, although it is not seen to bind rRNA by itself. It is important during the early stages of 50S assembly. The protein is Large ribosomal subunit protein uL13 of Xylella fastidiosa (strain 9a5c).